Here is a 430-residue protein sequence, read N- to C-terminus: T-kininogen 1 (430 aa).

A signal peptide spans 1-18 (MKLITILLLCSRLLPSLA). Gln-19 is modified (pyrrolidone carboxylic acid). The Cystatin kininogen-type 1 domain occupies 28–131 (CNDETVFQAV…TQICNITPGK (104 aa)). Disulfide bonds link Cys-28–Cys-404, Cys-83–Cys-94, Cys-107–Cys-125, Cys-141–Cys-144, Cys-205–Cys-217, Cys-228–Cys-247, Cys-263–Cys-266, Cys-327–Cys-339, and Cys-350–Cys-369. The N-linked (GlcNAc...) asparagine glycan is linked to Asn-82. Positions 150-253 (MDSSDLKPVL…SQSCDLYPGD (104 aa)) constitute a Cystatin kininogen-type 2 domain. 2 N-linked (GlcNAc...) asparagine glycosylation sites follow: Asn-168 and Asn-204. The Cystatin kininogen-type 3 domain maps to 272–375 (VDSPELKEAL…TVRCQALDMM (104 aa)). An N-linked (GlcNAc...) asparagine glycan is attached at Asn-326. The interval 411 to 430 (SKARAGPAPDHQAEASTVTP) is disordered.

In terms of processing, as T-kinin is preceded by a Met instead of an Arg or Lys, it is not released from its precursor by either tissue or plasma kallikrein. In terms of tissue distribution, plasma.

The protein resides in the secreted. It is found in the extracellular space. Functionally, kininogens are plasma glycoproteins with a number of functions: (1) as precursor of the active peptide bradykinin they effect smooth muscle contraction, induction of hypotension and increase of vascular permeability. (2) They play a role in blood coagulation by helping to position optimally prekallikrein and factor XI next to factor XII. (3) They are inhibitor of thiol proteases. The protein is T-kininogen 1 (Map1) of Rattus norvegicus (Rat).